Consider the following 465-residue polypeptide: Ras-like GTPase YcjX (465 aa).

Positions 26 to 33 (GLSRSGKT) match the Walker A motif motif. Residues Ser28, Gly31, Lys32, Thr33, Ala34, Trp95, Thr99, and Arg100 each contribute to the GTP site. Residues Gly31, Lys32, Thr33, Ala34, Trp95, and Thr99 each contribute to the GDP site. Lys249 bears the N6-acetyllysine mark. 4 residues coordinate GTP: Lys338, Asp340, His341, and Val380. GDP contacts are provided by Lys338, Asp340, His341, and Val380.

This sequence to H.influenzae HI_1637. Monomer in solution. The cofactor is Mg(2+).

It carries out the reaction GTP + H2O = GDP + phosphate + H(+). Its activity is regulated as follows. Alternates between an inactive form bound to GDP and an active form bound to GTP. Likely activated by a guanine nucleotide-exchange factor (GEF). Binds GTP and GDP. Has intrinsic GTPase activity. Does not hydrolyze ATP. May act as a transducer of stress responses. The chain is Ras-like GTPase YcjX (ycjX) from Escherichia coli (strain K12).